The primary structure comprises 323 residues: MAEISDITTQTQTVVLDIENYQSIDDSRSSDLSAPLVSVSFVQKLIGEFVGTFTMIFAGCSAIVVNETYGKPVTLPGIALVWGLVVTVMIYSIGHVSGAHFNPAVSIAFASSKKFPFNQVPGYIAAQLLGSTLAAAVLRLVFHLDDDVCSLKGDVYVGTYPSNSNTTSFVMEFIATFNLMFVISAVATDKRATGSFAGIAIGATIVLDILFSGPISGASMNPARSLGPALIWGCYKDLWLYIVSPVIGALSGAWTYGLLRSTKKSYSEIIRPNCNKVSSRDRQEASQDEICVLRVVDPANQNYFICSSPTDINGKCNVTCKLA.

Residue Met-1 is modified to N-acetylmethionine. A run of 2 helical transmembrane segments spans residues 45-65 and 73-93; these read LIGE…AIVV and VTLP…IYSI. The short motif at 102 to 104 is the NPA 1 element; sequence NPA. 3 helical membrane-spanning segments follow: residues 122-142, 167-187, and 196-216; these read GYIA…RLVF, TSFV…SAVA, and FAGI…GPIS. The NPA 2 motif lies at 221–223; it reads NPA. Residues 239–259 form a helical membrane-spanning segment; sequence WLYIVSPVIGALSGAWTYGLL.

This sequence belongs to the MIP/aquaporin (TC 1.A.8) family. NIP (TC 1.A.8.12) subfamily.

It localises to the membrane. Functionally, aquaporins facilitate the transport of water and small neutral solutes across cell membranes. The protein is Aquaporin NIP3-1 (NIP3-1) of Arabidopsis thaliana (Mouse-ear cress).